The primary structure comprises 209 residues: Large ribosomal subunit protein bL9 (209 aa).

The disordered stretch occupies residues 169–209 (RDGASFTEDYDPNAEPGLATEAEEAVADADDNAETNSEESL). Over residues 189-209 (EAEEAVADADDNAETNSEESL) the composition is skewed to acidic residues.

Belongs to the bacterial ribosomal protein bL9 family.

In terms of biological role, binds to the 23S rRNA. The protein is Large ribosomal subunit protein bL9 of Zymomonas mobilis subsp. mobilis (strain ATCC 31821 / ZM4 / CP4).